The chain runs to 365 residues: MLVPPEMIAVQSKTVFQINKYYAEKVQLRMGNIARVIREICKIVQEVLREVEVQEPRFISSLVECNGRFEGIEVVTPNFFEVVLYLNQMGVFNFVDDGSLPGAAVLKLSDGRKRSMSLWVEFITASGYLSARKIRSRFHTLVAQAVEKCPYREMVKLVPDTTEVKLKIRERYIVQITPAFKCTGIWPRSAAHWPIPHIPWPHPALVAEVKSEGFDLLSKESVILQGKNANIEGDAWILHFTEAENRLLQGGYRKRCLSILKTLCDRHLDLPGAPITYYHLKTLLLYECEKHPREAEWDANCIGDRLNGIFLQMISCLQNRRCPHYFLPSLDLFKGKSPTALDNASKHVWKLCREILTSTKAFDRL.

The protein belongs to the mab-21 family.

This is Protein mab-21-like from Aedes aegypti (Yellowfever mosquito).